The primary structure comprises 314 residues: Lipid A biosynthesis acyltransferase 2 (314 aa).

A helical membrane pass occupies residues 17–37 (LSPVYWFTWFVLGMIAGISMF). Positions 137–142 (HGWSVD) match the HXXXXD motif motif.

This sequence belongs to the LpxL/LpxM/LpxP family. LpxM subfamily.

It is found in the cell inner membrane. The catalysed reaction is an alpha-Kdo-(2-&gt;4)-alpha-Kdo-(2-&gt;6)-(acyl)-lipid IVA + a fatty acyl-[ACP] = an alpha-Kdo-(2-&gt;4)-alpha-Kdo-(2-&gt;6)-lipid A + holo-[ACP]. It functions in the pathway glycolipid biosynthesis; KDO(2)-lipid A biosynthesis; KDO(2)-lipid A from CMP-3-deoxy-D-manno-octulosonate and lipid IV(A): step 4/4. Its pathway is bacterial outer membrane biogenesis; lipopolysaccharide biosynthesis. Catalyzes the transfer of an acyl chain from an acyl-[acyl-carrier-protein] (ACP) to a Kdo(2)-(acyl)-lipid IV(A) to form a Kdo(2)-lipid A. The polypeptide is Lipid A biosynthesis acyltransferase 2 (Shigella flexneri).